The sequence spans 155 residues: S-ribosylhomocysteine lyase (155 aa).

Histidine 58, histidine 62, and cysteine 125 together coordinate Fe cation.

It belongs to the LuxS family. In terms of assembly, homodimer. Fe cation is required as a cofactor.

It catalyses the reaction S-(5-deoxy-D-ribos-5-yl)-L-homocysteine = (S)-4,5-dihydroxypentane-2,3-dione + L-homocysteine. Its function is as follows. Involved in the synthesis of autoinducer 2 (AI-2) which is secreted by bacteria and is used to communicate both the cell density and the metabolic potential of the environment. The regulation of gene expression in response to changes in cell density is called quorum sensing. Catalyzes the transformation of S-ribosylhomocysteine (RHC) to homocysteine (HC) and 4,5-dihydroxy-2,3-pentadione (DPD). This chain is S-ribosylhomocysteine lyase, found in Helicobacter pylori (strain P12).